A 429-amino-acid polypeptide reads, in one-letter code: Chaperone SurA (429 aa).

The N-terminal stretch at 1–18 is a signal peptide; it reads MFKRIALVCALFSGICFA. 2 PpiC domains span residues 170–271 and 281–380; these read NLTY…KLVA and ITQT…EVIA.

It localises to the periplasm. It carries out the reaction [protein]-peptidylproline (omega=180) = [protein]-peptidylproline (omega=0). In terms of biological role, chaperone involved in the correct folding and assembly of outer membrane proteins. Recognizes specific patterns of aromatic residues and the orientation of their side chains, which are found more frequently in integral outer membrane proteins. May act in both early periplasmic and late outer membrane-associated steps of protein maturation. In Legionella pneumophila (strain Paris), this protein is Chaperone SurA.